The following is a 214-amino-acid chain: Protein OPG176 (214 aa).

This sequence belongs to the orthopoxvirus OPG176 family. In terms of assembly, tetramer. Interacts with host MYD88, TRF4, TICAM2 and MAL.

Its function is as follows. BCL2-like protein which disrupts the host immune response by inhibiting the TLR4 signaling pathway leading to NF-kappa-B activation. Acts close to the plasma membrane and targets several host TIR-domain containing adapter proteins including MYD88, TIRAP, TRIF and TICAM2. In turn, blocks the host NF-kappa-B and TRIF-mediated IRF3 activation. The protein is Protein OPG176 (OPG176) of Homo sapiens (Human).